The primary structure comprises 40 residues: ALKEEFEEHAEKAKTLPENTSSENKLTLYGLYKQATVGNV.

Basic and acidic residues predominate over residues 1–15 (ALKEEFEEHAEKAKT). The disordered stretch occupies residues 1–25 (ALKEEFEEHAEKAKTLPENTSSENK). An ACB domain is found at 2–40 (LKEEFEEHAEKAKTLPENTSSENKLTLYGLYKQATVGNV).

This sequence belongs to the ACBP family.

The protein resides in the cytoplasm. In terms of biological role, binds medium- and long-chain acyl-CoA esters with very high affinity and may function as an intracellular carrier of acyl-CoA esters. The protein is Acyl-CoA-binding protein 2 of Digitalis lanata (Grecian foxglove).